Here is an 849-residue protein sequence, read N- to C-terminus: Aminopeptidase N (849 aa).

Residues Glu122 and 259-263 each bind substrate; that span reads GAMEN. His294 is a Zn(2+) binding site. The active-site Proton acceptor is the Glu295. The Zn(2+) site is built by His298 and Glu317.

The protein belongs to the peptidase M1 family. As to quaternary structure, monomer. Requires Zn(2+) as cofactor.

It localises to the cytoplasm. The catalysed reaction is Release of an N-terminal amino acid, Xaa-|-Yaa- from a peptide, amide or arylamide. Xaa is preferably Ala, but may be most amino acids including Pro (slow action). When a terminal hydrophobic residue is followed by a prolyl residue, the two may be released as an intact Xaa-Pro dipeptide.. In terms of biological role, aminopeptidase with broad substrate specificity to several peptides. It has more affinity for oligopeptides than for dipeptides. It plays an essential role in the metabolism, it may be involved in nitrogen supply or protein turnover. This chain is Aminopeptidase N (pepN), found in Lactococcus lactis subsp. lactis (Streptococcus lactis).